Reading from the N-terminus, the 258-residue chain is Thrombin-like enzyme CPI-enzyme 2 (258 aa).

The N-terminal stretch at Met1–Ala18 is a signal peptide. Residues Gln19–Leu24 constitute a propeptide that is removed on maturation. In terms of domain architecture, Peptidase S1 spans Val25–Ala249. 6 disulfide bridges follow: Cys31/Cys163, Cys50/Cys66, Cys98/Cys256, Cys142/Cys210, Cys174/Cys189, and Cys200/Cys225. Asn44 carries an N-linked (GlcNAc...) asparagine glycan. His65 acts as the Charge relay system in catalysis. N-linked (GlcNAc...) asparagine glycans are attached at residues Asn79 and Asn103. Asp110 (charge relay system) is an active-site residue. Residue Asn121 is glycosylated (N-linked (GlcNAc...) asparagine). The Charge relay system role is filled by Ser204.

It belongs to the peptidase S1 family. Snake venom subfamily. In terms of assembly, monomer. In terms of processing, N-glycosylated. In terms of tissue distribution, expressed by the venom gland.

Its subcellular location is the secreted. Thrombin-like snake venom serine protease that cleaves fibrinogen beta (FGB) releasing fibrinopeptide B. Promotes capillary permeability-increasing activity through the release of peptides from the beta-chain of fibrinogen. The polypeptide is Thrombin-like enzyme CPI-enzyme 2 (Gloydius ussuriensis (Ussuri mamushi)).